Reading from the N-terminus, the 178-residue chain is Redox-sensing transcriptional repressor Rex (178 aa).

59 to 64 (GVGNMG) lines the NAD(+) pocket.

Belongs to the transcriptional regulatory Rex family. As to quaternary structure, homodimer.

It is found in the cytoplasm. In terms of biological role, modulates transcription in response to changes in cellular NADH/NAD(+) redox state. The sequence is that of Redox-sensing transcriptional repressor Rex from Streptococcus suis.